The following is a 239-amino-acid chain: Purine nucleoside phosphorylase DeoD-type (239 aa).

His-5 contributes to the a purine D-ribonucleoside binding site. Residues Gly-21, Arg-25, Arg-44, and 88-91 (RVGS) contribute to the phosphate site. Residues 180–182 (EME) and 204–205 (SD) each bind a purine D-ribonucleoside. The Proton donor role is filled by Asp-205.

It belongs to the PNP/UDP phosphorylase family. As to quaternary structure, homohexamer; trimer of homodimers.

It carries out the reaction a purine D-ribonucleoside + phosphate = a purine nucleobase + alpha-D-ribose 1-phosphate. The enzyme catalyses a purine 2'-deoxy-D-ribonucleoside + phosphate = a purine nucleobase + 2-deoxy-alpha-D-ribose 1-phosphate. In terms of biological role, catalyzes the reversible phosphorolytic breakdown of the N-glycosidic bond in the beta-(deoxy)ribonucleoside molecules, with the formation of the corresponding free purine bases and pentose-1-phosphate. In Klebsiella pneumoniae (strain 342), this protein is Purine nucleoside phosphorylase DeoD-type.